Here is a 423-residue protein sequence, read N- to C-terminus: G protein-activated inward rectifier potassium channel 2 (423 aa).

The Cytoplasmic segment spans residues 1-89 (MAKLTESMTN…IFTTLVDLKW (89 aa)). Residues S16 and S23 each carry the phosphoserine modification. The helical transmembrane segment at 90-114 (RFNLLIFVMVYTVTWLFFGMIWWLI) threads the bilayer. The Extracellular portion of the chain corresponds to 115–138 (AYIRGDMDHIEDPSWTPCVTNLNG). Residues 139–150 (FVSAFLFSIETE) constitute an intramembrane region (helical; Pore-forming). The segment at residues 151-157 (TTIGYGY) is an intramembrane region (pore-forming). The Selectivity filter motif lies at 152-157 (TIGYGY). The Extracellular portion of the chain corresponds to 158-166 (RVITDKCPE). A helical transmembrane segment spans residues 167–188 (GIILLLIQSVLGSIVNAFMVGC). Topologically, residues 189-423 (MFVKISQPKK…VANLENESKV (235 aa)) are cytoplasmic. Residues 390–423 (NQHAELETEEEEKNLEEQTERNGDVANLENESKV) form a disordered region. A PDZ-binding motif is present at residues 420–423 (ESKV).

It belongs to the inward rectifier-type potassium channel (TC 1.A.2.1) family. KCNJ6 subfamily. In terms of assembly, associates with KCNJ3/GIRK1 or KCNJ5/GRIK4 to form a G-protein-activated heteromultimer pore-forming unit. The resulting inward current is much larger. Interacts (via PDZ-binding motif) with SNX27 (via PDZ domain); the interaction is required when endocytosed to prevent degradation in lysosomes and promote recycling to the plasma membrane.

Its subcellular location is the membrane. The enzyme catalyses K(+)(in) = K(+)(out). With respect to regulation, activated by phosphatidylinositol 4,5 biphosphate (PtdIns(4,5)P2). Its function is as follows. Inward rectifier potassium channels are characterized by a greater tendency to allow potassium to flow into the cell rather than out of it. Their voltage dependence is regulated by the concentration of extracellular potassium; as external potassium is raised, the voltage range of the channel opening shifts to more positive voltages. The inward rectification is mainly due to the blockage of outward current by internal magnesium. This potassium channel may be involved in the regulation of insulin secretion by glucose and/or neurotransmitters acting through G-protein-coupled receptors. The protein is G protein-activated inward rectifier potassium channel 2 (KCNJ6) of Pongo abelii (Sumatran orangutan).